The primary structure comprises 71 residues: Movement protein TGBp3 (71 aa).

At 1 to 3 (MEA) the chain is on the lumenal side. Residues 4 to 26 (GAYLNAIIFVLVATIIAVISVGL) form a helical membrane-spanning segment. The Cytoplasmic segment spans residues 27–71 (TQTEPCTIRITGESITVHACHLDSETIKALATLKPLSLERLSFHQ).

This sequence belongs to the Tymovirales TGBp3 protein family.

It localises to the host endoplasmic reticulum membrane. Functionally, plays a role in viral cell-to-cell propagation, by facilitating genome transport to neighboring plant cells through plasmosdesmata. May induce the formation of granular vesicles derived from the Endoplasmic reticulum, which align on actin filaments. The polypeptide is Movement protein TGBp3 (Brassica campestris (Field mustard)).